Reading from the N-terminus, the 306-residue chain is UDP-N-acetylenolpyruvoylglucosamine reductase (306 aa).

Positions 34 to 198 (VGGPADLLIT…LEVTFKLHNS (165 aa)) constitute an FAD-binding PCMH-type domain. Arg177 is a catalytic residue. Ser227 functions as the Proton donor in the catalytic mechanism. The active site involves Glu297.

This sequence belongs to the MurB family. FAD is required as a cofactor.

The protein localises to the cytoplasm. The catalysed reaction is UDP-N-acetyl-alpha-D-muramate + NADP(+) = UDP-N-acetyl-3-O-(1-carboxyvinyl)-alpha-D-glucosamine + NADPH + H(+). It participates in cell wall biogenesis; peptidoglycan biosynthesis. In terms of biological role, cell wall formation. The polypeptide is UDP-N-acetylenolpyruvoylglucosamine reductase (Clostridium botulinum (strain Langeland / NCTC 10281 / Type F)).